Reading from the N-terminus, the 380-residue chain is Dual-specificity RNA methyltransferase RlmN (380 aa).

The active-site Proton acceptor is Glu94. The Radical SAM core domain occupies Asp100–Asp339. The cysteines at positions 107 and 344 are disulfide-linked. [4Fe-4S] cluster-binding residues include Cys114, Cys118, and Cys121. Residues Gly168–Glu169, Ser200, Ser222–His224, and Asn301 each bind S-adenosyl-L-methionine. Cys344 (S-methylcysteine intermediate) is an active-site residue.

This sequence belongs to the radical SAM superfamily. RlmN family. Requires [4Fe-4S] cluster as cofactor.

It localises to the cytoplasm. It catalyses the reaction adenosine(2503) in 23S rRNA + 2 reduced [2Fe-2S]-[ferredoxin] + 2 S-adenosyl-L-methionine = 2-methyladenosine(2503) in 23S rRNA + 5'-deoxyadenosine + L-methionine + 2 oxidized [2Fe-2S]-[ferredoxin] + S-adenosyl-L-homocysteine. The catalysed reaction is adenosine(37) in tRNA + 2 reduced [2Fe-2S]-[ferredoxin] + 2 S-adenosyl-L-methionine = 2-methyladenosine(37) in tRNA + 5'-deoxyadenosine + L-methionine + 2 oxidized [2Fe-2S]-[ferredoxin] + S-adenosyl-L-homocysteine. Functionally, specifically methylates position 2 of adenine 2503 in 23S rRNA and position 2 of adenine 37 in tRNAs. m2A2503 modification seems to play a crucial role in the proofreading step occurring at the peptidyl transferase center and thus would serve to optimize ribosomal fidelity. The chain is Dual-specificity RNA methyltransferase RlmN from Vibrio atlanticus (strain LGP32) (Vibrio splendidus (strain Mel32)).